A 198-amino-acid chain; its full sequence is Small ribosomal subunit protein eS1 (198 aa).

It belongs to the eukaryotic ribosomal protein eS1 family.

This is Small ribosomal subunit protein eS1 from Nanoarchaeum equitans (strain Kin4-M).